A 369-amino-acid chain; its full sequence is Chorismate synthase (369 aa).

Residues arginine 48 and arginine 54 each contribute to the NADP(+) site. FMN is bound by residues 125–127 (RSS), 238–239 (NA), glycine 278, 293–297 (KPTSS), and arginine 319.

Belongs to the chorismate synthase family. In terms of assembly, homotetramer. It depends on FMNH2 as a cofactor.

The catalysed reaction is 5-O-(1-carboxyvinyl)-3-phosphoshikimate = chorismate + phosphate. Its pathway is metabolic intermediate biosynthesis; chorismate biosynthesis; chorismate from D-erythrose 4-phosphate and phosphoenolpyruvate: step 7/7. In terms of biological role, catalyzes the anti-1,4-elimination of the C-3 phosphate and the C-6 proR hydrogen from 5-enolpyruvylshikimate-3-phosphate (EPSP) to yield chorismate, which is the branch point compound that serves as the starting substrate for the three terminal pathways of aromatic amino acid biosynthesis. This reaction introduces a second double bond into the aromatic ring system. The polypeptide is Chorismate synthase (Nitrosococcus oceani (strain ATCC 19707 / BCRC 17464 / JCM 30415 / NCIMB 11848 / C-107)).